A 95-amino-acid polypeptide reads, in one-letter code: Phosphoribosyl-ATP pyrophosphatase (95 aa).

The protein belongs to the PRA-PH family.

Its subcellular location is the cytoplasm. It carries out the reaction 1-(5-phospho-beta-D-ribosyl)-ATP + H2O = 1-(5-phospho-beta-D-ribosyl)-5'-AMP + diphosphate + H(+). It participates in amino-acid biosynthesis; L-histidine biosynthesis; L-histidine from 5-phospho-alpha-D-ribose 1-diphosphate: step 2/9. This chain is Phosphoribosyl-ATP pyrophosphatase, found in Methanosphaera stadtmanae (strain ATCC 43021 / DSM 3091 / JCM 11832 / MCB-3).